The sequence spans 500 residues: MSDILTKKQDIELRRAVIQYLRYFVPEFAQDTAVNTISRLLLDADLNKFDNEIQRMIPKQYLEKKWTAVLRLHRKVEELERTIGYQSNKVEIELQSQPHSDITSNSLDRINWVPGIEPFQKLNMHNGHPVTAIDIHPFQPIMATASQDGTIVIWNLLNLTEPQQIIRNAHTRSINTIKFMNQEVMDGHSTKKNRLLLATGSSDLLIKIWDIEDSANLKALRTLTGHENIISCLCFHPTEPSKLVSCSKDKTTKVWDTRTGSIVLSFVGHSNWVRSVDINRTGEFTLTSSNDHSIRLSSLLTGTGIGLMIGHEQVVEKVKFLPMACNKYLDHIAGVKFQNELKINDDNYNKVDYKYCISGGRDNSVCIWLLPLPLIRSDGTMHPSTNPEGKLILKLTEHKSWVKDIAIHPNSRFIISVGDDRKINIWDLGLLLESNLLQPFRSISTQGFPSTLCMAKPVIKDQESDDLILLNEAMRCYLAVGHSDGTVTLWKKNIQKEYIL.

WD repeat units follow at residues His-125 to Gln-164, Ala-169 to Ala-219, Gly-225 to Ser-265, Gly-268 to Gly-310, Gln-338 to Asp-378, Glu-397 to Leu-436, and Ile-459 to Leu-500.

It belongs to the WD repeat LIS1/nudF family. In terms of assembly, self-associates. Interacts with NDL1 and dynein.

It is found in the cytoplasm. It localises to the cytoskeleton. The protein localises to the spindle pole. Its function is as follows. Positively regulates the activity of the minus-end directed microtubule motor protein dynein. Plays a central role in positioning the mitotic spindle at the bud neck during cell division. Targets cytoplasmic dynein to microtubule plus ends, thereby promoting dynein-mediated microtubule sliding along the bud cortex and consequently the movement of the mitotic spindle to the bud neck. The sequence is that of Nuclear distribution protein PAC1 from Komagataella phaffii (strain GS115 / ATCC 20864) (Yeast).